Consider the following 1086-residue polypeptide: Transcription initiation factor TFIID subunit 2 (1086 aa).

The span at 1–11 (MDFSEASTSGD) shows a compositional bias: polar residues. Disordered regions lie at residues 1–53 (MDFS…PPPV) and 1064–1086 (GYEA…NLMQ). 2 stretches are compositionally biased toward pro residues: residues 19–36 (PFPP…PPLA) and 44–53 (APPPLQPPPV). Positions 1067 to 1078 (AARRSPPRRDFG) are enriched in basic and acidic residues.

Belongs to the TAF2 family. As to quaternary structure, component of the TFIID basal transcription factor complex, composed of TATA-box-binding protein tbp-1, and a number of TBP-associated factors (TAFs).

Its subcellular location is the nucleus. In terms of biological role, the TFIID basal transcription factor complex plays a major role in the initiation of RNA polymerase II (Pol II)-dependent transcription. TFIID recognizes and binds promoters via its subunit tbp-1, a TATA-box-binding protein, and promotes assembly of the pre-initiation complex (PIC). The TFIID complex consists of tbp-1 and TBP-associated factors (TAFs), including taf-2. May regulate RNA polymerase II activity and thereby may control transcription initiation by RNA polymerase II. The chain is Transcription initiation factor TFIID subunit 2 from Caenorhabditis elegans.